Consider the following 92-residue polypeptide: Putative membrane protein insertion efficiency factor (92 aa).

The protein belongs to the UPF0161 family.

The protein resides in the cell inner membrane. In terms of biological role, could be involved in insertion of integral membrane proteins into the membrane. The chain is Putative membrane protein insertion efficiency factor from Synechococcus sp. (strain CC9902).